The sequence spans 83 residues: Small integral membrane protein 10 (83 aa).

The chain crosses the membrane as a helical span at residues 64–82 (FFYFYILASVILNVHLQVY).

The protein localises to the membrane. This is Small integral membrane protein 10 (SMIM10) from Homo sapiens (Human).